A 371-amino-acid chain; its full sequence is Queuine tRNA-ribosyltransferase (371 aa).

Residue aspartate 90 is the Proton acceptor of the active site. Substrate contacts are provided by residues 90 to 94 (DSGGF), aspartate 144, glutamine 188, and glycine 215. Positions 246 to 252 (GVGTPED) are RNA binding. The Nucleophile role is filled by aspartate 265. Residues 270–274 (TRNAR) form an RNA binding; important for wobble base 34 recognition region. 4 residues coordinate Zn(2+): cysteine 303, cysteine 305, cysteine 308, and histidine 334.

It belongs to the queuine tRNA-ribosyltransferase family. Homodimer. Within each dimer, one monomer is responsible for RNA recognition and catalysis, while the other monomer binds to the replacement base PreQ1. It depends on Zn(2+) as a cofactor.

It catalyses the reaction 7-aminomethyl-7-carbaguanine + guanosine(34) in tRNA = 7-aminomethyl-7-carbaguanosine(34) in tRNA + guanine. The protein operates within tRNA modification; tRNA-queuosine biosynthesis. Functionally, catalyzes the base-exchange of a guanine (G) residue with the queuine precursor 7-aminomethyl-7-deazaguanine (PreQ1) at position 34 (anticodon wobble position) in tRNAs with GU(N) anticodons (tRNA-Asp, -Asn, -His and -Tyr). Catalysis occurs through a double-displacement mechanism. The nucleophile active site attacks the C1' of nucleotide 34 to detach the guanine base from the RNA, forming a covalent enzyme-RNA intermediate. The proton acceptor active site deprotonates the incoming PreQ1, allowing a nucleophilic attack on the C1' of the ribose to form the product. After dissociation, two additional enzymatic reactions on the tRNA convert PreQ1 to queuine (Q), resulting in the hypermodified nucleoside queuosine (7-(((4,5-cis-dihydroxy-2-cyclopenten-1-yl)amino)methyl)-7-deazaguanosine). In Neisseria gonorrhoeae (strain ATCC 700825 / FA 1090), this protein is Queuine tRNA-ribosyltransferase.